The primary structure comprises 398 residues: tRNA-specific 2-thiouridylase MnmA (398 aa).

ATP is bound by residues 20-27 (AMSGGVDS) and Leu46. Catalysis depends on Cys114, which acts as the Nucleophile. A disulfide bridge connects residues Cys114 and Cys210. ATP is bound at residue Gly138. An interaction with tRNA region spans residues 160–162 (RDQ). The active-site Cysteine persulfide intermediate is Cys210.

This sequence belongs to the MnmA/TRMU family.

It is found in the cytoplasm. The enzyme catalyses S-sulfanyl-L-cysteinyl-[protein] + uridine(34) in tRNA + AH2 + ATP = 2-thiouridine(34) in tRNA + L-cysteinyl-[protein] + A + AMP + diphosphate + H(+). Functionally, catalyzes the 2-thiolation of uridine at the wobble position (U34) of tRNA, leading to the formation of s(2)U34. The sequence is that of tRNA-specific 2-thiouridylase MnmA from Brucella melitensis biotype 1 (strain ATCC 23456 / CCUG 17765 / NCTC 10094 / 16M).